Consider the following 191-residue polypeptide: dCTP deaminase (191 aa).

Residues 112–117 (KSTYAR), 136–138 (TLE), glutamine 157, tyrosine 173, and glutamine 183 contribute to the dCTP site. Catalysis depends on glutamate 138, which acts as the Proton donor/acceptor.

It belongs to the dCTP deaminase family. As to quaternary structure, homotrimer.

The enzyme catalyses dCTP + H2O + H(+) = dUTP + NH4(+). It functions in the pathway pyrimidine metabolism; dUMP biosynthesis; dUMP from dCTP (dUTP route): step 1/2. Catalyzes the deamination of dCTP to dUTP. The sequence is that of dCTP deaminase from Xylella fastidiosa (strain M12).